A 317-amino-acid polypeptide reads, in one-letter code: 2-oxoglutarate and iron-dependent oxygenase domain-containing protein 3 (317 aa).

The disordered stretch occupies residues 1-34 (MATRHRRRGGSAPSWAKPGKPGERPGGPKKSRGR). Over 1 to 39 (MATRHRRRGGSAPSWAKPGKPGERPGGPKKSRGRTSWKS) the chain is Cytoplasmic. A helical; Signal-anchor for type II membrane protein membrane pass occupies residues 40–60 (LLIWGVFGVTLGLMAGYYLWG). The Lumenal segment spans residues 61–317 (ELITDDSVTE…EHAIGDPTWT (257 aa)). 2 N-linked (GlcNAc...) asparagine glycosylation sites follow: Asn195 and Asn213. Residues 205–307 (KPTFFSRMNS…AITISFTCNP (103 aa)) form the Fe2OG dioxygenase domain. Positions 228 and 230 each coordinate Fe cation. Asn265 carries N-linked (GlcNAc...) asparagine glycosylation. His286 contributes to the Fe cation binding site. Arg296 is a catalytic residue. 2-oxoglutarate is bound at residue Arg296.

The protein belongs to the OGFOD3 family. Fe(2+) is required as a cofactor. L-ascorbate serves as cofactor.

It is found in the membrane. The polypeptide is 2-oxoglutarate and iron-dependent oxygenase domain-containing protein 3 (ogfod3) (Xenopus tropicalis (Western clawed frog)).